Consider the following 223-residue polypeptide: Phosphoribosylformylglycinamidine synthase subunit PurQ (223 aa).

One can recognise a Glutamine amidotransferase type-1 domain in the interval 4–223; it reads KIGVITFPGT…FLSAVGTIAA (220 aa). The active-site Nucleophile is Cys-87. Active-site residues include His-195 and Glu-197.

As to quaternary structure, part of the FGAM synthase complex composed of 1 PurL, 1 PurQ and 2 PurS subunits.

It is found in the cytoplasm. The enzyme catalyses N(2)-formyl-N(1)-(5-phospho-beta-D-ribosyl)glycinamide + L-glutamine + ATP + H2O = 2-formamido-N(1)-(5-O-phospho-beta-D-ribosyl)acetamidine + L-glutamate + ADP + phosphate + H(+). The catalysed reaction is L-glutamine + H2O = L-glutamate + NH4(+). It functions in the pathway purine metabolism; IMP biosynthesis via de novo pathway; 5-amino-1-(5-phospho-D-ribosyl)imidazole from N(2)-formyl-N(1)-(5-phospho-D-ribosyl)glycinamide: step 1/2. In terms of biological role, part of the phosphoribosylformylglycinamidine synthase complex involved in the purines biosynthetic pathway. Catalyzes the ATP-dependent conversion of formylglycinamide ribonucleotide (FGAR) and glutamine to yield formylglycinamidine ribonucleotide (FGAM) and glutamate. The FGAM synthase complex is composed of three subunits. PurQ produces an ammonia molecule by converting glutamine to glutamate. PurL transfers the ammonia molecule to FGAR to form FGAM in an ATP-dependent manner. PurS interacts with PurQ and PurL and is thought to assist in the transfer of the ammonia molecule from PurQ to PurL. The polypeptide is Phosphoribosylformylglycinamidine synthase subunit PurQ (Corynebacterium glutamicum (strain ATCC 13032 / DSM 20300 / JCM 1318 / BCRC 11384 / CCUG 27702 / LMG 3730 / NBRC 12168 / NCIMB 10025 / NRRL B-2784 / 534)).